We begin with the raw amino-acid sequence, 89 residues long: MALTAEEKQDIIAKYATHEGDTGSPEVQIALLTKRIADLTEHLKFHKHDHHSRRGLLLMVGDRRRLLDYLKKVDIERYRSLIERLGLRR.

This sequence belongs to the universal ribosomal protein uS15 family. Part of the 30S ribosomal subunit. Forms a bridge to the 50S subunit in the 70S ribosome, contacting the 23S rRNA.

Functionally, one of the primary rRNA binding proteins, it binds directly to 16S rRNA where it helps nucleate assembly of the platform of the 30S subunit by binding and bridging several RNA helices of the 16S rRNA. Its function is as follows. Forms an intersubunit bridge (bridge B4) with the 23S rRNA of the 50S subunit in the ribosome. The polypeptide is Small ribosomal subunit protein uS15 (Bifidobacterium animalis subsp. lactis (strain AD011)).